A 215-amino-acid chain; its full sequence is Thiamine-phosphate synthase (215 aa).

4-amino-2-methyl-5-(diphosphooxymethyl)pyrimidine contacts are provided by residues Gln-37–Lys-41 and Asn-69. Asp-70 and Asp-89 together coordinate Mg(2+). Ser-108 provides a ligand contact to 4-amino-2-methyl-5-(diphosphooxymethyl)pyrimidine. Position 134 to 136 (Thr-134 to Thr-136) interacts with 2-[(2R,5Z)-2-carboxy-4-methylthiazol-5(2H)-ylidene]ethyl phosphate. Lys-137 is a binding site for 4-amino-2-methyl-5-(diphosphooxymethyl)pyrimidine. Residues Gly-166 and Val-186–Ser-187 contribute to the 2-[(2R,5Z)-2-carboxy-4-methylthiazol-5(2H)-ylidene]ethyl phosphate site.

The protein belongs to the thiamine-phosphate synthase family. It depends on Mg(2+) as a cofactor.

The catalysed reaction is 2-[(2R,5Z)-2-carboxy-4-methylthiazol-5(2H)-ylidene]ethyl phosphate + 4-amino-2-methyl-5-(diphosphooxymethyl)pyrimidine + 2 H(+) = thiamine phosphate + CO2 + diphosphate. It catalyses the reaction 2-(2-carboxy-4-methylthiazol-5-yl)ethyl phosphate + 4-amino-2-methyl-5-(diphosphooxymethyl)pyrimidine + 2 H(+) = thiamine phosphate + CO2 + diphosphate. The enzyme catalyses 4-methyl-5-(2-phosphooxyethyl)-thiazole + 4-amino-2-methyl-5-(diphosphooxymethyl)pyrimidine + H(+) = thiamine phosphate + diphosphate. It functions in the pathway cofactor biosynthesis; thiamine diphosphate biosynthesis; thiamine phosphate from 4-amino-2-methyl-5-diphosphomethylpyrimidine and 4-methyl-5-(2-phosphoethyl)-thiazole: step 1/1. In terms of biological role, condenses 4-methyl-5-(beta-hydroxyethyl)thiazole monophosphate (THZ-P) and 2-methyl-4-amino-5-hydroxymethyl pyrimidine pyrophosphate (HMP-PP) to form thiamine monophosphate (TMP). This chain is Thiamine-phosphate synthase, found in Yersinia pseudotuberculosis serotype I (strain IP32953).